The following is a 127-amino-acid chain: Large ribosomal subunit protein eL8 (127 aa).

Belongs to the eukaryotic ribosomal protein eL8 family. As to quaternary structure, part of the 50S ribosomal subunit. Probably part of the RNase P complex.

Its subcellular location is the cytoplasm. Functionally, multifunctional RNA-binding protein that recognizes the K-turn motif in ribosomal RNA, the RNA component of RNase P, box H/ACA, box C/D and box C'/D' sRNAs. This is Large ribosomal subunit protein eL8 from Saccharolobus islandicus (strain Y.N.15.51 / Yellowstone #2) (Sulfolobus islandicus).